A 91-amino-acid chain; its full sequence is Probable Fe(2+)-trafficking protein (91 aa).

It belongs to the Fe(2+)-trafficking protein family.

Could be a mediator in iron transactions between iron acquisition and iron-requiring processes, such as synthesis and/or repair of Fe-S clusters in biosynthetic enzymes. The protein is Probable Fe(2+)-trafficking protein of Tolumonas auensis (strain DSM 9187 / NBRC 110442 / TA 4).